Consider the following 71-residue polypeptide: ATP synthase F(0) complex subunit e, mitochondrial (71 aa).

Residue Lys-34 is modified to N6-acetyllysine.

Belongs to the ATPase e subunit family. Component of the ATP synthase complex composed at least of ATP5F1A/subunit alpha, ATP5F1B/subunit beta, ATP5MC1/subunit c (homooctomer), MT-ATP6/subunit a, MT-ATP8/subunit 8, ATP5ME/subunit e, ATP5MF/subunit f, ATP5MG/subunit g, ATP5MK/subunit k, ATP5MJ/subunit j, ATP5F1C/subunit gamma, ATP5F1D/subunit delta, ATP5F1E/subunit epsilon, ATP5PF/subunit F6, ATP5PB/subunit b, ATP5PD/subunit d, ATP5PO/subunit OSCP. ATP synthase complex consists of a soluble F(1) head domain (subunits alpha(3) and beta(3)) - the catalytic core - and a membrane F(0) domain - the membrane proton channel (subunits c, a, 8, e, f, g, k and j). These two domains are linked by a central stalk (subunits gamma, delta, and epsilon) rotating inside the F1 region and a stationary peripheral stalk (subunits F6, b, d, and OSCP).

It localises to the mitochondrion. Its subcellular location is the mitochondrion inner membrane. Subunit e, of the mitochondrial membrane ATP synthase complex (F(1)F(0) ATP synthase or Complex V) that produces ATP from ADP in the presence of a proton gradient across the membrane which is generated by electron transport complexes of the respiratory chain. ATP synthase complex consist of a soluble F(1) head domain - the catalytic core - and a membrane F(1) domain - the membrane proton channel. These two domains are linked by a central stalk rotating inside the F(1) region and a stationary peripheral stalk. During catalysis, ATP synthesis in the catalytic domain of F(1) is coupled via a rotary mechanism of the central stalk subunits to proton translocation. In vivo, can only synthesize ATP although its ATP hydrolase activity can be activated artificially in vitro. Part of the complex F(0) domain. This chain is ATP synthase F(0) complex subunit e, mitochondrial, found in Bos taurus (Bovine).